Consider the following 164-residue polypeptide: CASP-like protein 1C2 (164 aa).

At 1–8 (MAVELKKV) the chain is on the cytoplasmic side. Residues 9 to 29 (FSTILRFLALAATVVAVIVMI) traverse the membrane as a helical segment. Residues 30 to 53 (RSHDSAIVLNLTFSAKYNNTPAFK) lie on the Extracellular side of the membrane. N-linked (GlcNAc...) asparagine glycosylation is present at Asn-39. A helical membrane pass occupies residues 54-74 (YFVIAEGIASVYTIIVIFLWS). Over 75–80 (KGLLGR) the chain is Cytoplasmic. A helical transmembrane segment spans residues 81–101 (LIVILDMVTTVLLTSSISAAL). The Extracellular segment spans residues 102–129 (AIAQVGKKGNSHAGWLPVCGQVPKFCDQ). Residues 130-150 (AIIALVAGFVAAIVYFMLLLC) traverse the membrane as a helical segment. The Cytoplasmic segment spans residues 151 to 164 (SLHAVLTPIFAVKP).

It belongs to the Casparian strip membrane proteins (CASP) family. Homodimer and heterodimers.

It localises to the cell membrane. This Ricinus communis (Castor bean) protein is CASP-like protein 1C2.